The following is a 454-amino-acid chain: Alkaline extracellular protease (454 aa).

The first 15 residues, 1 to 15 (MKLATAFTILTAVLA), serve as a signal peptide directing secretion. Positions 16–157 (APLAAPAPAP…EIPASSNAKR (142 aa)) are excised as a propeptide. The 79-residue stretch at 68 to 146 (FIVVFDSSAT…TVEPDTIVSL (79 aa)) folds into the Inhibitor I9 domain. A glycan (N-linked (GlcNAc...) asparagine) is linked at asparagine 123. The Peptidase S8 domain maps to 166–454 (QWGLSRISHK…NAVAYNGVGI (289 aa)). Active-site charge relay system residues include aspartate 200, histidine 231, and serine 397.

Belongs to the peptidase S8 family. Post-translationally, the pro-region is removed through cleavage by XPR6 after Lys156-Arg157, which yields mature active XPR2. The 10 consecutive -X-Ala- or -X-Pro- dipeptides located over 100 amino acids upstream of the N-terminal of mature XPR2 are subject to dipeptidyl aminopeptidase (DPAPase)-processing. DPAPase activity is not necessary for XPR6 cleavage and for secretion of mature active XPR2. In terms of processing, N-glycosylated. Glycosylation within the pro-region has no effect on secretion and maturation at 18 degrees Celsius, but is required for secretion at 28 degrees Celsius.

It is found in the secreted. It carries out the reaction Hydrolysis of proteins with broad specificity for peptide bonds, and a preference for a large uncharged residue in P1. Hydrolyzes peptide amides.. Its activity is regulated as follows. The protease activity is completely inhibited by the serine inhibitor PMSF but is not affected by thiol group inhibitors and in the presence of dithiothreitol. In the presence of high concentrations of o-phenanthroline the protease activity is only partially inhibited. The pro-region plays an inhibitory role and may provide a mechanism for preventing premature activation in the secretory pathway. Major secreted protein that belongs to the subtilisin family serine proteases. The sequence is that of Alkaline extracellular protease from Yarrowia lipolytica (strain CLIB 122 / E 150) (Yeast).